Here is a 755-residue protein sequence, read N- to C-terminus: Tryptophan 2-monooxygenase (755 aa).

Residues S247, E267, K275, and R295 each coordinate FMN. R295 lines the substrate pocket.

The protein belongs to the tryptophan 2-monooxygenase family. Requires FMN as cofactor.

The enzyme catalyses L-tryptophan + O2 = indole-3-acetamide + CO2 + H2O. It functions in the pathway plant hormone metabolism; auxin biosynthesis. This chain is Tryptophan 2-monooxygenase (tms1), found in Agrobacterium tumefaciens (strain Ach5).